A 169-amino-acid polypeptide reads, in one-letter code: Peptide deformylase (169 aa).

Fe cation is bound by residues cysteine 91 and histidine 133. Glutamate 134 is a catalytic residue. Residue histidine 137 coordinates Fe cation.

The protein belongs to the polypeptide deformylase family. Fe(2+) serves as cofactor.

The catalysed reaction is N-terminal N-formyl-L-methionyl-[peptide] + H2O = N-terminal L-methionyl-[peptide] + formate. Functionally, removes the formyl group from the N-terminal Met of newly synthesized proteins. Requires at least a dipeptide for an efficient rate of reaction. N-terminal L-methionine is a prerequisite for activity but the enzyme has broad specificity at other positions. This chain is Peptide deformylase, found in Citrobacter koseri (strain ATCC BAA-895 / CDC 4225-83 / SGSC4696).